Consider the following 697-residue polypeptide: Elongation factor G (697 aa).

One can recognise a tr-type G domain in the interval 8–290 (ERYRNFGIMA…AVVDYLPSPL (283 aa)). Residues 17-24 (AHIDAGKT), 88-92 (DTPGH), and 142-145 (NKLD) contribute to the GTP site.

This sequence belongs to the TRAFAC class translation factor GTPase superfamily. Classic translation factor GTPase family. EF-G/EF-2 subfamily.

It is found in the cytoplasm. In terms of biological role, catalyzes the GTP-dependent ribosomal translocation step during translation elongation. During this step, the ribosome changes from the pre-translocational (PRE) to the post-translocational (POST) state as the newly formed A-site-bound peptidyl-tRNA and P-site-bound deacylated tRNA move to the P and E sites, respectively. Catalyzes the coordinated movement of the two tRNA molecules, the mRNA and conformational changes in the ribosome. This chain is Elongation factor G, found in Sphingopyxis alaskensis (strain DSM 13593 / LMG 18877 / RB2256) (Sphingomonas alaskensis).